Reading from the N-terminus, the 417-residue chain is 4-hydroxy-3-methylbut-2-enyl diphosphate reductase (417 aa).

C56 contacts [4Fe-4S] cluster. Residue H86 participates in (2E)-4-hydroxy-3-methylbut-2-enyl diphosphate binding. H86 provides a ligand contact to dimethylallyl diphosphate. Residue H86 coordinates isopentenyl diphosphate. C151 contacts [4Fe-4S] cluster. Position 179 (H179) interacts with (2E)-4-hydroxy-3-methylbut-2-enyl diphosphate. Position 179 (H179) interacts with dimethylallyl diphosphate. H179 contacts isopentenyl diphosphate. E181 serves as the catalytic Proton donor. Position 244 (T244) interacts with (2E)-4-hydroxy-3-methylbut-2-enyl diphosphate. C282 serves as a coordination point for [4Fe-4S] cluster. (2E)-4-hydroxy-3-methylbut-2-enyl diphosphate contacts are provided by S311, S312, N313, and S374. Dimethylallyl diphosphate contacts are provided by S311, S312, N313, and S374. Isopentenyl diphosphate-binding residues include S311, S312, N313, and S374.

The protein belongs to the IspH family. It depends on [4Fe-4S] cluster as a cofactor.

It catalyses the reaction isopentenyl diphosphate + 2 oxidized [2Fe-2S]-[ferredoxin] + H2O = (2E)-4-hydroxy-3-methylbut-2-enyl diphosphate + 2 reduced [2Fe-2S]-[ferredoxin] + 2 H(+). The enzyme catalyses dimethylallyl diphosphate + 2 oxidized [2Fe-2S]-[ferredoxin] + H2O = (2E)-4-hydroxy-3-methylbut-2-enyl diphosphate + 2 reduced [2Fe-2S]-[ferredoxin] + 2 H(+). It functions in the pathway isoprenoid biosynthesis; dimethylallyl diphosphate biosynthesis; dimethylallyl diphosphate from (2E)-4-hydroxy-3-methylbutenyl diphosphate: step 1/1. Its pathway is isoprenoid biosynthesis; isopentenyl diphosphate biosynthesis via DXP pathway; isopentenyl diphosphate from 1-deoxy-D-xylulose 5-phosphate: step 6/6. Functionally, catalyzes the conversion of 1-hydroxy-2-methyl-2-(E)-butenyl 4-diphosphate (HMBPP) into a mixture of isopentenyl diphosphate (IPP) and dimethylallyl diphosphate (DMAPP). Acts in the terminal step of the DOXP/MEP pathway for isoprenoid precursor biosynthesis. The protein is 4-hydroxy-3-methylbut-2-enyl diphosphate reductase of Gloeobacter violaceus (strain ATCC 29082 / PCC 7421).